The following is a 567-amino-acid chain: Urease subunit alpha (567 aa).

The 439-residue stretch at 129–567 folds into the Urease domain; it reads GGIDSHIHFI…LPLAQRYFLF (439 aa). Ni(2+)-binding residues include His134, His136, and Lys217. An N6-carboxylysine modification is found at Lys217. His219 serves as a coordination point for substrate. Residues His246 and His272 each coordinate Ni(2+). Residue His320 is the Proton donor of the active site. A Ni(2+)-binding site is contributed by Asp360.

It belongs to the metallo-dependent hydrolases superfamily. Urease alpha subunit family. In terms of assembly, heterotrimer of UreA (gamma), UreB (beta) and UreC (alpha) subunits. Three heterotrimers associate to form the active enzyme. Ni cation is required as a cofactor. Post-translationally, carboxylation allows a single lysine to coordinate two nickel ions.

The protein localises to the cytoplasm. It catalyses the reaction urea + 2 H2O + H(+) = hydrogencarbonate + 2 NH4(+). It functions in the pathway nitrogen metabolism; urea degradation; CO(2) and NH(3) from urea (urease route): step 1/1. This Pseudomonas entomophila (strain L48) protein is Urease subunit alpha.